The following is a 680-amino-acid chain: E3 ubiquitin-protein ligase brl2 (680 aa).

The stretch at 44 to 72 (RSIQFDELESKIEGLQNLAEEKLKVLATL) forms a coiled coil. The tract at residues 206–233 (PQSTKVKEEATTSSKGKDEEKKVSTVEQ) is disordered. Residues 210–229 (KVKEEATTSSKGKDEEKKVS) are compositionally biased toward basic and acidic residues. 3 coiled-coil regions span residues 261–288 (LDSN…TNLK), 353–399 (MQND…ETMV), and 485–609 (DSLH…LKDT). The RING-type zinc-finger motif lies at 627–667 (CSVCNFERWKDRIISLCGHGFCYQCIQKRIETRQRRCPICG).

Belongs to the BRE1 family. Component of the histone H2B ubiquitin ligase complex (HULC) composed of at least brl1, brl2, rhp6 and shf1.

It localises to the nucleus. It catalyses the reaction S-ubiquitinyl-[E2 ubiquitin-conjugating enzyme]-L-cysteine + [acceptor protein]-L-lysine = [E2 ubiquitin-conjugating enzyme]-L-cysteine + N(6)-ubiquitinyl-[acceptor protein]-L-lysine.. It participates in protein modification; protein ubiquitination. Its function is as follows. E3 ubiquitin-protein ligase which belongs to the histone H2B ubiquitin ligase complex (HULC) which mediates monoubiquitination of histone H2B to form H2BK123ub1. H2BK123ub1 gives a specific tag for epigenetic transcriptional activation and is also a prerequisite for H3K4me and H3K79me formation. The chain is E3 ubiquitin-protein ligase brl2 (brl2) from Schizosaccharomyces pombe (strain 972 / ATCC 24843) (Fission yeast).